Consider the following 986-residue polypeptide: Probable ATP-dependent RNA helicase ddx42 (986 aa).

3 disordered regions span residues 1-149 (MSKR…DEDD), 165-192 (AAID…DIDN), and 206-252 (QLAN…IEPL). Positions 29-82 (SNINNNNNSNNNNNNNNNNNNNNNNNNNKNNIGTGINLNIKNNNNINNNNNKSG) are enriched in low complexity. The segment covering 105–117 (PPKSSMTTLNKSP) has biased composition (polar residues). Positions 119-137 (NFENASSNNNNNNNNNNQE) are enriched in low complexity. Positions 217-236 (DDDVDYSSLDDDDGYFDDEE) are enriched in acidic residues. Positions 305–333 (TSFGHYGFDDILLQAIAKQSIETPTPIQK) match the Q motif motif. In terms of domain architecture, Helicase ATP-binding spans 336–511 (IPIALSGRDL…RTILSDPIKI (176 aa)). Residue 349 to 356 (AKTGSGKT) coordinates ATP. A DEAD box motif is present at residues 459 to 462 (DEAD). The region spanning 522–684 (DITQIVQVLK…FVPPELIDVA (163 aa)) is the Helicase C-terminal domain. The segment at 688–986 (PHFKRERGGG…FNQRSQYNRR (299 aa)) is disordered. Over residues 696–723 (GGGGGSNRGRGRGGGGVGYRRNSRGGGV) the composition is skewed to gly residues. Composition is skewed to low complexity over residues 753-764 (NPNNTDNSEINN) and 771-978 (NNEN…NNFN).

It belongs to the DEAD box helicase family. DDX42 subfamily.

It is found in the nucleus. The enzyme catalyses ATP + H2O = ADP + phosphate + H(+). Functionally, probable ATP-dependent RNA helicase which may bind to partially double-stranded RNAs (dsRNAs) in order to unwind RNA secondary structures. The polypeptide is Probable ATP-dependent RNA helicase ddx42 (ddx42) (Dictyostelium discoideum (Social amoeba)).